Here is a 478-residue protein sequence, read N- to C-terminus: Probable cytosolic Fe-S cluster assembly factor CPIJ010948 (478 aa).

C23, C69, C72, C75, C189, C245, C396, and C400 together coordinate [4Fe-4S] cluster.

Belongs to the NARF family.

Component of the cytosolic iron-sulfur (Fe/S) protein assembly machinery. Required for maturation of extramitochondrial Fe/S proteins. This Culex quinquefasciatus (Southern house mosquito) protein is Probable cytosolic Fe-S cluster assembly factor CPIJ010948.